A 332-amino-acid polypeptide reads, in one-letter code: MEAIINKLYQQASLTEQESQQLFDTIIRGELDPILMASALTALKIKGETPDEIAGAAKALLANAQPFPRPDYDFADIVGTGGDGHNTINISTTAAFVAAACGLKVAKHGNRSVSSKSGSSDLLDSFGINLAMSAEDTRSAVDNIGVAFLFAPQYHSGVKHAMPVRQTMKTRTIFNILGPLINPARPNIELMGVYSQELVRPIAETMLKMGMKRAAVVHGSGLDEVAIHGDTLVAEIKDGVIHEYTLTPADFGVNTHPLEAIKGGDPEENKAIITHLLTGKGTEAQLSAVAVNVALLMRLFGHEDLKANTQQAIDVMNSGKAYQLVEKLAQHA.

5-phospho-alpha-D-ribose 1-diphosphate is bound by residues glycine 79, 82–83, threonine 87, 89–92, 107–115, and serine 119; these read GD, NIST, and KHGNRSVSS. Glycine 79 serves as a coordination point for anthranilate. Serine 91 contacts Mg(2+). Asparagine 110 contacts anthranilate. Residue arginine 165 coordinates anthranilate. Aspartate 223 and glutamate 224 together coordinate Mg(2+).

Belongs to the anthranilate phosphoribosyltransferase family. In terms of assembly, homodimer. Requires Mg(2+) as cofactor.

It carries out the reaction N-(5-phospho-beta-D-ribosyl)anthranilate + diphosphate = 5-phospho-alpha-D-ribose 1-diphosphate + anthranilate. It participates in amino-acid biosynthesis; L-tryptophan biosynthesis; L-tryptophan from chorismate: step 2/5. Catalyzes the transfer of the phosphoribosyl group of 5-phosphorylribose-1-pyrophosphate (PRPP) to anthranilate to yield N-(5'-phosphoribosyl)-anthranilate (PRA). This Vibrio vulnificus (strain CMCP6) protein is Anthranilate phosphoribosyltransferase.